A 208-amino-acid chain; its full sequence is Rac-like GTP-binding protein ARAC8 (208 aa).

Residue 15-22 (GDGAVGKT) coordinates GTP. Positions 37–45 (YIPTVFDNF) match the Effector region motif. GTP is bound by residues 62-66 (DTAGQ) and 120-123 (TKMD). Residues cysteine 199 and cysteine 205 are each lipidated (S-palmitoyl cysteine).

This sequence belongs to the small GTPase superfamily. Rho family. As to quaternary structure, interacts with ICR1. Binds to SPK1. In terms of processing, although this sequence has a C-terminal -CXXX, it is palmitoylated at Cys-205, rather than prenylated.

It is found in the membrane. In terms of biological role, acts as a negative regulator of abscisic acid (ABA) responses. This is Rac-like GTP-binding protein ARAC8 (ARAC8) from Arabidopsis thaliana (Mouse-ear cress).